The sequence spans 709 residues: Polyribonucleotide nucleotidyltransferase (709 aa).

Mg(2+) is bound by residues aspartate 486 and aspartate 492. Residues 553–612 (PRIHTIKINPDKIKDVIGKGGSVIRALTEETGTTIEIEDDGTVKIAATDGEKAKHAISRI) enclose the KH domain. Residues 622–690 (ARIYTGKVTR…RQGRVRLSIK (69 aa)) form the S1 motif domain.

The protein belongs to the polyribonucleotide nucleotidyltransferase family. In terms of assembly, component of the RNA degradosome, which is a multiprotein complex involved in RNA processing and mRNA degradation. Mg(2+) is required as a cofactor.

It localises to the cytoplasm. It carries out the reaction RNA(n+1) + phosphate = RNA(n) + a ribonucleoside 5'-diphosphate. Its function is as follows. Involved in mRNA degradation. Catalyzes the phosphorolysis of single-stranded polyribonucleotides processively in the 3'- to 5'-direction. The protein is Polyribonucleotide nucleotidyltransferase of Photorhabdus laumondii subsp. laumondii (strain DSM 15139 / CIP 105565 / TT01) (Photorhabdus luminescens subsp. laumondii).